A 696-amino-acid chain; its full sequence is MAFGRNNRVRFRDWISEGTEYGYGRNKARPSLNTVLKNVRRGLKKPLSFGSHNKKRDSNSSTTTQKNIINPQGSFLQNWNKIFLFASVIALAIDPLFFYIPIVDGERHCLNLHRNLEIAASVLRTFIDAFYIIHIVFQFRTAYISPSSRVFGRGELVDDPKAIAIKYLSSYFIIDLLSILPLPQLVVLAVIPNVNKPVSLITKDYLITVIFTQYIPRILRIYPLYTEVTRTSGIVTETAWAGAAWNLSLYMLASHVFGALWYLISVEREDRCWREACEKIPEVCNFRFLYCDGNSSVRNDFLTTSCPFINPDDITNSTVFNFGIFTDALKSGIVESDDFWKKFFYCFWWGLRNLSALGQNLNTSKFVGEIIFAVSICISGLVLFALLIGNMQKYLESTTVREEEMRVRKRDAEQWMSHRMLPDDLRKRIRRYEQYKWQETRGVEEENLLRNLPKDLRRDIKRHFCLDLLKKVPLFEIMDEQLLDAVCDKLKPVLYTENSYAIREGDPVEEMLFVMRGKLMSATTNGGRTGFFNAVYLKPSDFCGEDLLTWALDPQSSSHFPISTRTVQALTEVEAFALAADDLKLVASQFRRLHSKQLQHTFRFYSVQWRTWGASFIQAAWRRHCRRKLARSLTEEEDRFRNAITKRERNAASSSSLVATLYASRFASNALRNLRTNNLPLLPPKPSEPDFSLRNP.

Residues 1–81 are Cytoplasmic-facing; that stretch reads MAFGRNNRVR…QGSFLQNWNK (81 aa). The interval 45–65 is disordered; that stretch reads KPLSFGSHNKKRDSNSSTTTQ. Residues 82 to 102 form a helical membrane-spanning segment; the sequence is IFLFASVIALAIDPLFFYIPI. At 103 to 116 the chain is on the extracellular side; it reads VDGERHCLNLHRNL. Residues 117–137 traverse the membrane as a helical segment; the sequence is EIAASVLRTFIDAFYIIHIVF. Topologically, residues 138–170 are cytoplasmic; sequence QFRTAYISPSSRVFGRGELVDDPKAIAIKYLSS. The helical transmembrane segment at 171-191 threads the bilayer; sequence YFIIDLLSILPLPQLVVLAVI. Residues 192–204 are Extracellular-facing; the sequence is PNVNKPVSLITKD. Residues 205 to 225 traverse the membrane as a helical segment; it reads YLITVIFTQYIPRILRIYPLY. The Cytoplasmic portion of the chain corresponds to 226-243; it reads TEVTRTSGIVTETAWAGA. Residues 244-264 form a helical membrane-spanning segment; that stretch reads AWNLSLYMLASHVFGALWYLI. The Extracellular portion of the chain corresponds to 265-367; the sequence is SVEREDRCWR…GQNLNTSKFV (103 aa). A helical transmembrane segment spans residues 368–388; it reads GEIIFAVSICISGLVLFALLI. Residues 389–696 lie on the Cytoplasmic side of the membrane; the sequence is GNMQKYLEST…SEPDFSLRNP (308 aa). A nucleoside 3',5'-cyclic phosphate is bound by residues 474 to 598 and Glu-545; that span reads LFEI…SKQL. The segment at 590–605 is calmodulin-binding; that stretch reads FRRLHSKQLQHTFRFY. Residues 610-639 form the IQ domain; the sequence is RTWGASFIQAAWRRHCRRKLARSLTEEEDR. Positions 677-696 are disordered; the sequence is NNLPLLPPKPSEPDFSLRNP.

The protein belongs to the cyclic nucleotide-gated cation channel (TC 1.A.1.5) family. Homotetramer or heterotetramer.

The protein localises to the cell membrane. In terms of biological role, putative cyclic nucleotide-gated ion channel. This is Putative cyclic nucleotide-gated ion channel 13 (CNGC13) from Arabidopsis thaliana (Mouse-ear cress).